The following is a 94-amino-acid chain: Small ribosomal subunit protein uS19c (94 aa).

This sequence belongs to the universal ribosomal protein uS19 family.

It is found in the plastid. The protein resides in the chloroplast. Functionally, protein S19 forms a complex with S13 that binds strongly to the 16S ribosomal RNA. This is Small ribosomal subunit protein uS19c (rps19) from Euglena gracilis.